Consider the following 255-residue polypeptide: 5'-nucleotidase SurE (255 aa).

The a divalent metal cation site is built by Asp-8, Asp-9, Ser-40, and Asn-92.

It belongs to the SurE nucleotidase family. Requires a divalent metal cation as cofactor.

Its subcellular location is the cytoplasm. It carries out the reaction a ribonucleoside 5'-phosphate + H2O = a ribonucleoside + phosphate. Nucleotidase that shows phosphatase activity on nucleoside 5'-monophosphates. The sequence is that of 5'-nucleotidase SurE from Brucella abortus (strain S19).